The chain runs to 1110 residues: MTDVDPHATRRDLVPNIPAELLEAGFDNVEEIGRGGFGVVYRCVQPSLDRAVAVKVLSTDLDRDNLERFLREQRAMGRLSGHPHIVTVLQVGVLAGGRPFIVMPYHAKNSLETLIRRHGPLDWRETLSIGVKLAGALEAAHRVGTLHRDVKPGNILLTDYGEPQLTDFGIARIAGGFETATGVIAGSPAFTAPEVLEGASPTPASDVYSLGATLFCALTGHAAYERRSGERVIAQFLRITSQPIPDLRKQGLPADVAAAIERAMARHPADRPATAADVGEELRDVQRRNGVSVDEMPLPVELGVERRRSPEAHAAHRHTGGGTPTVPTPPTPATKYRPSVPTGSLVTRSRLTDILRAGGRRRLILIHAPSGFGKSTLAAQWREELSRDGAAVAWLTIDNDDNNEVWFLSHLLESIRRVRPTLAESLGHVLEEHGDDAGRYVLTSLIDEIHENDDRIAVVIDDWHRVSDSRTQAALGFLLDNGCHHLQLIVTSWSRAGLPVGRLRIGDELAEIDSAALRFDTDEAAALLNDAGGLRLPRADVQALTTSTDGWAAALRLAALSLRGGGDATQLLRGLSGASDVIHEFLSENVLDTLEPELREFLLVASVTERTCGGLASALAGITNGRAMLEEAEHRGLFLQRTEDDPNWFRFHQMFADFLHRRLERGGSHRVAELHRRASAWFAENGYLHEAVDHALAAGDPARAVDLVEQDETNLPEQSKMTTLLAIVQKLPTSMVVSRARLQLAIAWANILLQRPAPATGALNRFETALGRAELPEATQADLRAEADVLRAVAEVFADRVERVDDLLAEAMSRPDTLPPRVPGTAGNTAALAAICRFEFAEVYPLLDWAAPYQEMMGPFGTVYAQCLRGMAARNRLDIVAALQNFRTAFEVGTAVGAHSHAARLAGSLLAELLYETGDLAGAGRLMDESYLLGSEGGAVDYLAARYVIGARVKAAQGDHEGAADRLSTGGDTAVQLGLPRLAARINNERIRLGIALPAAVAADLLAPRTIPRDNGIATMTAELDEDSAVRLLSAGDSADRDQACQRAGALAAAIDGTRRPLAALQAQILHIETLAATGRESDARNELAPVATKCAELGLSRLLVDAGLA.

The Protein kinase domain occupies 26–283; that stretch reads FDNVEEIGRG…TAADVGEELR (258 aa). ATP contacts are provided by residues 32-40 and Lys55; that span reads IGRGGFGVV. Asp149 serves as the catalytic Proton acceptor. 2 residues coordinate Mg(2+): Asn154 and Asp167. Phosphothreonine; by autocatalysis is present on residues Thr179 and Thr181. The segment at 308–343 is disordered; sequence RSPEAHAAHRHTGGGTPTVPTPPTPATKYRPSVPTG.

The protein belongs to the protein kinase superfamily. Ser/Thr protein kinase family. As to quaternary structure, forms oligomeric complexes in solution. Post-translationally, can autophosphorylate the carboxyl terminal region in addition to Thr-179 and Thr-181.

Its subcellular location is the cytoplasm. The protein localises to the cell membrane. The protein resides in the secreted. It is found in the cell wall. It catalyses the reaction L-seryl-[protein] + ATP = O-phospho-L-seryl-[protein] + ADP + H(+). The enzyme catalyses L-threonyl-[protein] + ATP = O-phospho-L-threonyl-[protein] + ADP + H(+). Its function is as follows. Key microbial factor involved in regulation of early and late events in tuberculosis infection, and in host-pathogen interactions. The protein is Serine/threonine-protein kinase PknK (pknK) of Mycobacterium tuberculosis (strain CDC 1551 / Oshkosh).